Consider the following 483-residue polypeptide: MTERSVGYVETKHHHLKEPFRLVSGDELAEVSIAYETYGKLNSDKSNVILICHALTGDAHAAGWHEGDKKPGWWDIVIGPGKAFDTNKYFIICSNVLGGCKGTTGPSSTNPQSGLPYGLSFPRITIEDMVNLQHTLLNNLGISRLYAIAGGSMGGMQVLQWAVSYPGFMKRSIVLASTAISSPQQIAFNEVARQAIIRDPYWNDGDYYGVELPKQGLSLARMIGHITYLSDDSMHDKFGRDIRENEMFQVESYLHHQGDTFTSRFDPNSYLYLTGAIDKFDLSNGYSLAKTFSNIESEFMVISVSSDWLYPSYQSEEIVQALGSNDVDVQYRKLISHFGHDAFLLEKGQLNYLLSTFLGHLTVGDVMSEDVSTLHEGCTLEEAAQLMILKNATHIPILATSGRITGIVTSWDITRAVANKISSIENILSRDILTSRPDESLSSAALVMEDHAISALPVVDDRGCLVGILSSDTISAMVGKGTK.

An AB hydrolase-1 domain is found at 47 to 346 (NVILICHALT…HFGHDAFLLE (300 aa)). Residue serine 152 is the Nucleophile of the active site. Arginine 221 lines the substrate pocket. Residues aspartate 307 and histidine 340 contribute to the active site. Aspartate 341 is a substrate binding site. CBS domains are found at residues 367–423 (MSED…KISS) and 428–483 (LSRD…KGTK).

This sequence belongs to the AB hydrolase superfamily. MetX family. As to quaternary structure, homodimer.

The protein localises to the cytoplasm. The catalysed reaction is L-homoserine + acetyl-CoA = O-acetyl-L-homoserine + CoA. It functions in the pathway amino-acid biosynthesis; L-methionine biosynthesis via de novo pathway; O-acetyl-L-homoserine from L-homoserine: step 1/1. Transfers an acetyl group from acetyl-CoA to L-homoserine, forming acetyl-L-homoserine. This Methanohalophilus mahii (strain ATCC 35705 / DSM 5219 / SLP) protein is Homoserine O-acetyltransferase.